The primary structure comprises 808 residues: DNA gyrase subunit B (808 aa).

The region spanning 429 to 544 is the Toprim domain; it reads SELFIVEGDS…KGYLYIAQPP (116 aa). Positions 435, 509, and 511 each coordinate Mg(2+).

Belongs to the type II topoisomerase GyrB family. In terms of assembly, heterotetramer, composed of two GyrA and two GyrB chains. In the heterotetramer, GyrA contains the active site tyrosine that forms a transient covalent intermediate with DNA, while GyrB binds cofactors and catalyzes ATP hydrolysis. Mg(2+) serves as cofactor. Mn(2+) is required as a cofactor. Requires Ca(2+) as cofactor.

It localises to the cytoplasm. It catalyses the reaction ATP-dependent breakage, passage and rejoining of double-stranded DNA.. Functionally, a type II topoisomerase that negatively supercoils closed circular double-stranded (ds) DNA in an ATP-dependent manner to modulate DNA topology and maintain chromosomes in an underwound state. Negative supercoiling favors strand separation, and DNA replication, transcription, recombination and repair, all of which involve strand separation. Also able to catalyze the interconversion of other topological isomers of dsDNA rings, including catenanes and knotted rings. Type II topoisomerases break and join 2 DNA strands simultaneously in an ATP-dependent manner. This is DNA gyrase subunit B from Rickettsia bellii (strain RML369-C).